The following is a 180-amino-acid chain: MVKESIPKEGENIKIQSYKHDGNIHRVWSETTILKGTEHVIIGGNDHTLVTESDGRTWITREPAIVYFHSEYWFNVICMFREDGIYYYCNLSSPFACDEEALKYIDYDLDIKVYPNGKYHLLDEDEYEQHMNQMNYPHDIDIILRRNVDILQQWIEQKKGPFAPDFIKVWKERYKKIRDY.

R26 functions as the Proton donor in the catalytic mechanism. Positions 90, 106, 108, 110, 123, and 126 each coordinate Mg(2+).

The protein belongs to the Ntdp family. Requires Mg(2+) as cofactor.

It catalyses the reaction a ribonucleoside 5'-triphosphate + H2O = a ribonucleoside 5'-diphosphate + phosphate + H(+). The catalysed reaction is a ribonucleoside 5'-diphosphate + H2O = a ribonucleoside 5'-phosphate + phosphate + H(+). Functionally, has nucleoside phosphatase activity towards nucleoside triphosphates and nucleoside diphosphates. The polypeptide is Nucleoside triphosphate/diphosphate phosphatase (Staphylococcus epidermidis (strain ATCC 35984 / DSM 28319 / BCRC 17069 / CCUG 31568 / BM 3577 / RP62A)).